The sequence spans 407 residues: uncharacterized protein (407 aa).

Transmembrane regions (helical) follow at residues 22–42 (IVSV…PLAV), 51–71 (LGFS…ATLA), 101–121 (ALLL…GLLV), 126–146 (VLGI…IGRV), 154–174 (VISW…PVGV), 179–199 (ALIP…GYYL), 227–247 (GLGL…ITLY), 258–278 (LSLT…ANTI), 286–306 (VAIV…LAPV), 309–329 (VALV…PALG), 347–367 (AYSV…GYVA), and 369–389 (AFGY…GVAL).

This sequence belongs to the major facilitator superfamily. YhhS family.

It localises to the cell inner membrane. This is an uncharacterized protein from Burkholderia mallei (strain NCTC 10229).